We begin with the raw amino-acid sequence, 240 residues long: UDP-2,3-diacylglucosamine hydrolase (240 aa).

Residues Asp7, His9, Asp40, Asn78, and His113 each contribute to the Mn(2+) site. Asn78–Arg79 serves as a coordination point for substrate. Substrate-binding residues include Asp121, Ser159, Lys166, and His194. Mn(2+) contacts are provided by His194 and His196.

Belongs to the LpxH family. Mn(2+) serves as cofactor.

The protein resides in the cell inner membrane. The catalysed reaction is UDP-2-N,3-O-bis[(3R)-3-hydroxytetradecanoyl]-alpha-D-glucosamine + H2O = 2-N,3-O-bis[(3R)-3-hydroxytetradecanoyl]-alpha-D-glucosaminyl 1-phosphate + UMP + 2 H(+). Its pathway is glycolipid biosynthesis; lipid IV(A) biosynthesis; lipid IV(A) from (3R)-3-hydroxytetradecanoyl-[acyl-carrier-protein] and UDP-N-acetyl-alpha-D-glucosamine: step 4/6. Functionally, hydrolyzes the pyrophosphate bond of UDP-2,3-diacylglucosamine to yield 2,3-diacylglucosamine 1-phosphate (lipid X) and UMP by catalyzing the attack of water at the alpha-P atom. Involved in the biosynthesis of lipid A, a phosphorylated glycolipid that anchors the lipopolysaccharide to the outer membrane of the cell. In Pseudomonas putida (strain ATCC 47054 / DSM 6125 / CFBP 8728 / NCIMB 11950 / KT2440), this protein is UDP-2,3-diacylglucosamine hydrolase.